A 238-amino-acid polypeptide reads, in one-letter code: Sugar fermentation stimulation protein homolog (238 aa).

The protein belongs to the SfsA family.

The polypeptide is Sugar fermentation stimulation protein homolog (Vibrio vulnificus (strain YJ016)).